Here is a 265-residue protein sequence, read N- to C-terminus: Hydroxyethylthiazole kinase 2 (265 aa).

A substrate-binding site is contributed by Met-39. Residues Lys-115 and Thr-168 each contribute to the ATP site. Gly-195 contributes to the substrate binding site.

Belongs to the Thz kinase family. It depends on Mg(2+) as a cofactor.

The enzyme catalyses 5-(2-hydroxyethyl)-4-methylthiazole + ATP = 4-methyl-5-(2-phosphooxyethyl)-thiazole + ADP + H(+). It participates in cofactor biosynthesis; thiamine diphosphate biosynthesis; 4-methyl-5-(2-phosphoethyl)-thiazole from 5-(2-hydroxyethyl)-4-methylthiazole: step 1/1. Its function is as follows. Catalyzes the phosphorylation of the hydroxyl group of 4-methyl-5-beta-hydroxyethylthiazole (THZ). In Clostridium botulinum (strain 657 / Type Ba4), this protein is Hydroxyethylthiazole kinase 2.